The sequence spans 150 residues: Large ribosomal subunit protein bL9 (150 aa).

The protein belongs to the bacterial ribosomal protein bL9 family.

Binds to the 23S rRNA. The polypeptide is Large ribosomal subunit protein bL9 (Photobacterium profundum (strain SS9)).